A 32-amino-acid chain; its full sequence is Trypsin inhibitor 4 (32 aa).

Disulfide bonds link C6–C23, C13–C25, and C19–C31.

The protein belongs to the protease inhibitor I7 (squash-type serine protease inhibitor) family.

It localises to the secreted. Its function is as follows. Inhibits trypsin. The sequence is that of Trypsin inhibitor 4 from Cucurbita maxima (Pumpkin).